A 95-amino-acid chain; its full sequence is DNA-directed RNA polymerase subunit Rpo11 (95 aa).

This sequence belongs to the archaeal Rpo11/eukaryotic RPB11/RPC19 RNA polymerase subunit family. Part of the RNA polymerase complex.

It is found in the cytoplasm. The catalysed reaction is RNA(n) + a ribonucleoside 5'-triphosphate = RNA(n+1) + diphosphate. Functionally, DNA-dependent RNA polymerase (RNAP) catalyzes the transcription of DNA into RNA using the four ribonucleoside triphosphates as substrates. The protein is DNA-directed RNA polymerase subunit Rpo11 of Thermococcus sibiricus (strain DSM 12597 / MM 739).